The chain runs to 188 residues: Threonylcarbamoyl-AMP synthase (188 aa).

Residues 3 to 188 (QLQPSAVATT…RSGQILRNGS (186 aa)) enclose the YrdC-like domain.

It belongs to the SUA5 family. TsaC subfamily.

Its subcellular location is the cytoplasm. It catalyses the reaction L-threonine + hydrogencarbonate + ATP = L-threonylcarbamoyladenylate + diphosphate + H2O. Its function is as follows. Required for the formation of a threonylcarbamoyl group on adenosine at position 37 (t(6)A37) in tRNAs that read codons beginning with adenine. Catalyzes the conversion of L-threonine, HCO(3)(-)/CO(2) and ATP to give threonylcarbamoyl-AMP (TC-AMP) as the acyladenylate intermediate, with the release of diphosphate. The chain is Threonylcarbamoyl-AMP synthase from Shewanella frigidimarina (strain NCIMB 400).